The primary structure comprises 429 residues: Enolase (429 aa).

Gln163 provides a ligand contact to (2R)-2-phosphoglycerate. Glu205 serves as the catalytic Proton donor. Residues Asp242, Glu287, and Asp314 each coordinate Mg(2+). (2R)-2-phosphoglycerate contacts are provided by Lys339, Arg368, Ser369, and Lys390. The Proton acceptor role is filled by Lys339.

The protein belongs to the enolase family. Mg(2+) serves as cofactor.

Its subcellular location is the cytoplasm. It localises to the secreted. It is found in the cell surface. It carries out the reaction (2R)-2-phosphoglycerate = phosphoenolpyruvate + H2O. It functions in the pathway carbohydrate degradation; glycolysis; pyruvate from D-glyceraldehyde 3-phosphate: step 4/5. Its function is as follows. Catalyzes the reversible conversion of 2-phosphoglycerate (2-PG) into phosphoenolpyruvate (PEP). It is essential for the degradation of carbohydrates via glycolysis. This is Enolase from Cupriavidus taiwanensis (strain DSM 17343 / BCRC 17206 / CCUG 44338 / CIP 107171 / LMG 19424 / R1) (Ralstonia taiwanensis (strain LMG 19424)).